A 392-amino-acid chain; its full sequence is MPNFKSKKIKEINLPYSKDDVEFLWLAKNDNVSLIYTKVQEESFFLQIKKAQNGFVIKGDKHTKPSKIGYLQKALKIFKEGFCEDIINEAFGLKNNALIEKTPFIVDNFDELLSRLQGKIYIEIGFGSGRHLLYQAKENPNVLILGVEIYNPALTQVAKLAKAQNVNNILLIQSDARLLLSVLKSKSVEKIFLHFPVPWDKKPHRRVIGKDFCKECARVLTQNGRFELRTDSFEYFNFTLEQFLTFPVPKFSLRKNENLEISSKYEDRWKKQEKNIYDLWVWNFNQECKNYELNEFNLSSVEFSKEDLKKIEQNFKNITIKKDDFFLHFESIYKQDENLLLKVAFGAFNKPEHCYLHLDKTIDFAFKEPFKIQENIKAINELKEILKVQFKI.

Positions 123, 148, and 175 each coordinate S-adenosyl-L-methionine. Substrate contacts are provided by K201 and D231.

This sequence belongs to the class I-like SAM-binding methyltransferase superfamily. TrmB family.

It catalyses the reaction guanosine(46) in tRNA + S-adenosyl-L-methionine = N(7)-methylguanosine(46) in tRNA + S-adenosyl-L-homocysteine. It participates in tRNA modification; N(7)-methylguanine-tRNA biosynthesis. Its function is as follows. Catalyzes the formation of N(7)-methylguanine at position 46 (m7G46) in tRNA. The polypeptide is tRNA (guanine-N(7)-)-methyltransferase (Campylobacter jejuni (strain RM1221)).